Here is a 91-residue protein sequence, read N- to C-terminus: N.vectensis toxin 8 (91 aa).

A signal peptide spans methionine 1–threonine 26. 3 cysteine pairs are disulfide-bonded: cysteine 45–cysteine 76, cysteine 47–cysteine 67, and cysteine 60–cysteine 77.

As to expression, expressed in ectodermal gland cells.

Its function is as follows. Has toxic effects on zebrafish larvae. It causes contractile paralysis and twitching of the tail within 20 minutes, followed by death within 30 minutes. Does not show any toxicity when injected into arthropods (cherry shrimps or grass shrimps). The polypeptide is N.vectensis toxin 8 (Nematostella vectensis (Starlet sea anemone)).